The primary structure comprises 634 residues: Protein IcfG (634 aa).

Residues 306–361 (HHSTVPILDLTKASQAIAAGDLDYEININQGNRQDEIGILGNSFIYMKNQIKTLIA) form the HAMP domain. Residues 385–633 (PISLPDLQQW…DDITMIAVYR (249 aa)) enclose the PPM-type phosphatase domain.

In terms of biological role, involved in cross-regulation of inorganic carbon and glucose metabolisms. The polypeptide is Protein IcfG (icfG) (Synechocystis sp. (strain ATCC 27184 / PCC 6803 / Kazusa)).